Here is a 230-residue protein sequence, read N- to C-terminus: Ribonuclease 3 (230 aa).

The 121-residue stretch at 5-125 (YSRFYNILGY…VIGAIYLDSD (121 aa)) folds into the RNase III domain. Glu-40 serves as a coordination point for Mg(2+). Asp-44 is an active-site residue. Mg(2+)-binding residues include Asp-111 and Glu-114. Glu-114 is an active-site residue. Residues 153–223 (DSKSKLQEIL…AEKMIEMLSQ (71 aa)) enclose the DRBM domain.

The protein belongs to the ribonuclease III family. Homodimer. Requires Mg(2+) as cofactor.

Its subcellular location is the cytoplasm. The catalysed reaction is Endonucleolytic cleavage to 5'-phosphomonoester.. In terms of biological role, digests double-stranded RNA. Involved in the processing of primary rRNA transcript to yield the immediate precursors to the large and small rRNAs (23S and 16S). Processes some mRNAs, and tRNAs when they are encoded in the rRNA operon. Processes pre-crRNA and tracrRNA of type II CRISPR loci if present in the organism. In Francisella tularensis subsp. holarctica (strain OSU18), this protein is Ribonuclease 3.